The chain runs to 374 residues: Putative clathrin assembly protein At1g33340 (374 aa).

The region spanning 30–163 (YNEKAFFDIE…GWIINQAGKL (134 aa)) is the ENTH domain.

Its subcellular location is the membrane. It is found in the clathrin-coated pit. The protein resides in the golgi apparatus. It localises to the cytoplasmic vesicle. The protein localises to the clathrin-coated vesicle. The polypeptide is Putative clathrin assembly protein At1g33340 (Arabidopsis thaliana (Mouse-ear cress)).